Here is a 205-residue protein sequence, read N- to C-terminus: Holliday junction branch migration complex subunit RuvA (205 aa).

Residues 1-67 (MITSIFGKVT…QIIEEAFAFN (67 aa)) are domain I. Residues 68 to 146 (TLEEKEWFCR…NNKNIKGVQV (79 aa)) form a domain II region. Residues 147–150 (ADGY) are flexible linker. Residues 150–205 (YDELFETLKSLGYKQQEIQDALKMIEVKPDFDISQLVAEVIKLMSFKNNEITNKTA) form a domain III region.

The protein belongs to the RuvA family. As to quaternary structure, homotetramer. Forms an RuvA(8)-RuvB(12)-Holliday junction (HJ) complex. HJ DNA is sandwiched between 2 RuvA tetramers; dsDNA enters through RuvA and exits via RuvB. An RuvB hexamer assembles on each DNA strand where it exits the tetramer. Each RuvB hexamer is contacted by two RuvA subunits (via domain III) on 2 adjacent RuvB subunits; this complex drives branch migration. In the full resolvosome a probable DNA-RuvA(4)-RuvB(12)-RuvC(2) complex forms which resolves the HJ.

The protein localises to the cytoplasm. Its function is as follows. The RuvA-RuvB-RuvC complex processes Holliday junction (HJ) DNA during genetic recombination and DNA repair, while the RuvA-RuvB complex plays an important role in the rescue of blocked DNA replication forks via replication fork reversal (RFR). RuvA specifically binds to HJ cruciform DNA, conferring on it an open structure. The RuvB hexamer acts as an ATP-dependent pump, pulling dsDNA into and through the RuvAB complex. HJ branch migration allows RuvC to scan DNA until it finds its consensus sequence, where it cleaves and resolves the cruciform DNA. This Mycoplasma genitalium (strain ATCC 33530 / DSM 19775 / NCTC 10195 / G37) (Mycoplasmoides genitalium) protein is Holliday junction branch migration complex subunit RuvA.